We begin with the raw amino-acid sequence, 1171 residues long: ATP-dependent helicase/deoxyribonuclease subunit B (1171 aa).

One can recognise a UvrD-like helicase ATP-binding domain in the interval methionine 1–alanine 390. An ATP-binding site is contributed by glycine 8–serine 15. Positions methionine 281 to aspartate 587 constitute a UvrD-like helicase C-terminal domain. Positions 805, 1129, 1132, and 1138 each coordinate [4Fe-4S] cluster.

Belongs to the helicase family. AddB/RexB type 1 subfamily. Heterodimer of AddA and AddB. It depends on Mg(2+) as a cofactor. [4Fe-4S] cluster is required as a cofactor.

The heterodimer acts as both an ATP-dependent DNA helicase and an ATP-dependent, dual-direction single-stranded exonuclease. Recognizes the chi site generating a DNA molecule suitable for the initiation of homologous recombination. The AddB subunit has 5' -&gt; 3' nuclease activity but not helicase activity. The protein is ATP-dependent helicase/deoxyribonuclease subunit B of Bacillus cereus (strain ATCC 10987 / NRS 248).